The following is a 299-amino-acid chain: Acetylglutamate kinase (299 aa).

Substrate-binding positions include 70–71 (GG), Arg92, and Asn186.

The protein belongs to the acetylglutamate kinase family. ArgB subfamily.

Its subcellular location is the cytoplasm. The catalysed reaction is N-acetyl-L-glutamate + ATP = N-acetyl-L-glutamyl 5-phosphate + ADP. It participates in amino-acid biosynthesis; L-arginine biosynthesis; N(2)-acetyl-L-ornithine from L-glutamate: step 2/4. Its function is as follows. Catalyzes the ATP-dependent phosphorylation of N-acetyl-L-glutamate. The sequence is that of Acetylglutamate kinase from Petrotoga mobilis (strain DSM 10674 / SJ95).